Consider the following 2788-residue polypeptide: E3 ubiquitin-protein ligase UBR5 (2788 aa).

Residues 68–78 (RLELGKPDNND) are compositionally biased toward basic and acidic residues. The segment at 68 to 165 (RLELGKPDNN…DRGSGLLGSQ (98 aa)) is disordered. A compositionally biased stretch (low complexity) spans 84 to 101 (SSSGTGRTSRPGRTSDSP). Position 100 is a phosphoserine (Ser100). Residues 125–134 (GVGGSGGGSS) show a composition bias toward gly residues. The UBA domain occupies 174–216 (VIPEELISQAQVVLQGKSRSVIIRELQRTNLDVNLAVNNLLSR). At Ser317 the chain carries Phosphoserine. Residues 318 to 337 (FDNERGSTSKEGEPNPDKKN) show a composition bias toward basic and acidic residues. Residues 318–343 (FDNERGSTSKEGEPNPDKKNTPVQSP) are disordered. 2 positions are modified to phosphoserine: Ser342 and Ser567. The span at 572-593 (KSMEKASKTIETKPESKQEPVK) shows a compositional bias: basic and acidic residues. Positions 572–636 (KSMEKASKTI…PAPKEEEKVN (65 aa)) are disordered. Ser601 is modified (phosphoserine). Positions 603-617 (ASTCSDASSIASSAS) are enriched in low complexity. Position 626 is a phosphothreonine (Thr626). Residues Ser797, Ser917, and Ser1007 each carry the phosphoserine modification. Disordered stretches follow at residues 988–1024 (AGLG…SMDP) and 1041–1064 (TAAT…EPSV). The span at 1006 to 1022 (VSPPIAPPSWVPDPPSM) shows a compositional bias: pro residues. The span at 1050 to 1062 (PSTSTIPGPSTEP) shows a compositional bias: polar residues. Residues Thr1104 and Thr1124 each carry the phosphothreonine modification. Residues 1166–1234 (DTCSFTWTGA…EKCKCKTLIA (69 aa)) form a UBR-type zinc finger. Ser1216, Ser1297, Ser1344, Ser1364, and Ser1470 each carry phosphoserine. The disordered stretch occupies residues 1288–1308 (REDRNRKTASPDDSDMPDHDL). The disordered stretch occupies residues 1504–1729 (SVEPLPPRPS…PSSTSTPAAS (226 aa)). Residues 1513-1526 (SSDQSSSSSQSQSS) show a composition bias toward low complexity. The segment covering 1527–1542 (YIIRNPQQRRISQSQP) has biased composition (polar residues). Position 1538 is a phosphoserine (Ser1538). Acidic residues-rich tracts occupy residues 1548-1563 (EEQD…EVEV) and 1594-1603 (HDEDGSDMEL). Residues 1618–1627 (NHSNQDNASG) are compositionally biased toward polar residues. Low complexity-rich tracts occupy residues 1630–1646 (SVVT…ASSV), 1657–1670 (SNDS…SSQS), and 1715–1729 (AAST…PAAS). Phosphothreonine is present on Thr1725. A Phosphoserine modification is found at Ser1730. Position 1735 is a phosphotyrosine (Tyr1735). Ser1769 carries the phosphoserine modification. Positions 1848 to 1881 (LASAGDPGHPNHPLHASQNSARRERMTAREEASL) are disordered. A compositionally biased stretch (basic and acidic residues) spans 1868–1881 (ARRERMTAREEASL). Position 1959 is a phosphothreonine (Thr1959). Residues 1974–2011 (GIDNEDSEHENDDDTSQSATLNDKDDESLPAETGQNHP) form a disordered region. The segment covering 1975–1988 (IDNEDSEHENDDDT) has biased composition (acidic residues). Ser1980, Ser2016, and Ser2018 each carry phosphoserine. A Phosphothreonine modification is found at Thr2020. At Ser2066 the chain carries Phosphoserine. The disordered stretch occupies residues 2106–2132 (NRQKKAGEDQSMLAEEADSSKPGPSAH). Residue Thr2203 is modified to Phosphothreonine. Phosphoserine is present on residues Ser2231 and Ser2279. Residues 2313 to 2383 (HTSLMQRLRN…SDDPDPLPAH (71 aa)) form a disordered region. Basic and acidic residues-rich tracts occupy residues 2322–2338 (NRGE…EMRR) and 2346–2358 (SRRD…RRQL). Positions 2367–2444 (PASEGNPSDD…AMELIVAHGR (78 aa)) constitute a PABC domain. An HECT domain is found at 2451–2788 (ILDLGLLDSS…AIKTKNFGFV (338 aa)). Phosphoserine occurs at positions 2459, 2473, and 2475. The tract at residues 2463-2490 (VQENRKRHGSSRSVVDMDLDDTDDGDDN) is disordered. Positions 2479-2489 (MDLDDTDDGDD) are enriched in acidic residues. Cys2757 (glycyl thioester intermediate) is an active-site residue.

It belongs to the UBR5 family. As to quaternary structure, homotetramer; composed of a dimer of dimers. Associates with CDK9 and TFIIS/TCEA1 and forms a transcription regulatory complex made of CDK9, RNAP II, UBR5 and TFIIS/TCEA1 that can stimulate target gene transcription (e.g. gamma fibrinogen/FGG) by recruiting their promoters. Associates with the E3 ligase complex containing DYRK2, EDD/UBR5, DDB1 and DCAF1 proteins (EDVP complex). Binds TOPBP1. Interacts with PIH1D1. Interacts with CIB1. As to expression, highest levels found in testis. Also present in liver, kidney, lung and brain.

Its subcellular location is the nucleus. The protein localises to the cytoplasm. It catalyses the reaction S-ubiquitinyl-[E2 ubiquitin-conjugating enzyme]-L-cysteine + [acceptor protein]-L-lysine = [E2 ubiquitin-conjugating enzyme]-L-cysteine + N(6)-ubiquitinyl-[acceptor protein]-L-lysine.. It functions in the pathway protein modification; protein ubiquitination. Its function is as follows. E3 ubiquitin-protein ligase involved in different protein quality control pathways in the cytoplasm and nucleus. Mainly acts as a ubiquitin chain elongator that extends pre-ubiquitinated substrates. Component of the N-end rule pathway: ubiquitinates proteins bearing specific N-terminal residues that are destabilizing according to the N-end rule, leading to their degradation. Recognizes type-1 N-degrons, containing positively charged amino acids (Arg, Lys and His). Together with UBR4, part of a cytoplasm protein quality control pathway that prevents protein aggregation by catalyzing assembly of heterotypic 'Lys-11'-/'Lys-48'-linked branched ubiquitin chains on aggregated proteins, leading to substrate recognition by the segregase p97/VCP and degradation by the proteasome: UBR5 is probably branching multiple 'Lys-48'-linked chains of substrates initially modified with mixed conjugates by UBR4. Together with ITCH, catalyzes 'Lys-48'-/'Lys-63'-branched ubiquitination of TXNIP, leading to its degradation: UBR5 mediates branching of 'Lys-48'-linked chains of substrates initially modified with 'Lys-63'-linked conjugates by ITCH. Catalytic component of a nuclear protein quality control pathway that mediates ubiquitination and degradation of unpaired transcription factors (i.e. transcription factors that are not assembled into functional multiprotein complexes): specifically recognizes and binds degrons that are not accessible when transcription regulators are associated with their coactivators. Ubiquitinates various unpaired transcription regulator (MYC, SUPT4H1, SUPT5H, CDC20 and MCRS1), as well as ligand-bound nuclear receptors (ESR1, NR1H3, NR3C1, PGR, RARA, RXRA AND VDR) that are not associated with their nuclear receptor coactivators (NCOAs). Involved in maturation and/or transcriptional regulation of mRNA by mediating polyubiquitination and activation of CDK9. Also acts as a regulator of DNA damage response by acting as a suppressor of RNF168, an E3 ubiquitin-protein ligase that promotes accumulation of 'Lys-63'-linked histone H2A and H2AX at DNA damage sites, thereby acting as a guard against excessive spreading of ubiquitinated chromatin at damaged chromosomes. Regulates DNA topoisomerase II binding protein (TopBP1) in the DNA damage response. Ubiquitinates acetylated PCK1. Acts as a positive regulator of the canonical Wnt signaling pathway by mediating (1) ubiquitination and stabilization of CTNNB1, and (2) 'Lys-48'-linked ubiquitination and degradation of TLE3. Promotes disassembly of the mitotic checkpoint complex (MCC) from the APC/C complex by catalyzing ubiquitination of BUB1B, BUB3 and CDC20. Plays an essential role in extraembryonic development. Required for the maintenance of skeletal tissue homeostasis by acting as an inhibitor of hedgehog (HH) signaling. This is E3 ubiquitin-protein ligase UBR5 (Ubr5) from Rattus norvegicus (Rat).